We begin with the raw amino-acid sequence, 82 residues long: Alpha-defensin 17 (82 aa).

An N-terminal signal peptide occupies residues 1-8 (LLAFQVQA). Residues 1–43 (LLAFQVQADPIQNTDEETKTEEQPGEEDQAVSVSFGDPEGTSL) are disordered. The propeptide occupies 9–47 (DPIQNTDEETKTEEQPGEEDQAVSVSFGDPEGTSLQEES). Disulfide bonds link Cys53–Cys81, Cys55–Cys70, and Cys60–Cys80.

This sequence belongs to the alpha-defensin family.

The protein resides in the secreted. Its function is as follows. Probably contributes to the antimicrobial barrier function of the small bowel mucosa. This is Alpha-defensin 17 (Defa17) from Mus musculus (Mouse).